Here is a 734-residue protein sequence, read N- to C-terminus: Serine protease FAM111B (734 aa).

Methionine 1 carries the N-acetylmethionine modification. Composition is skewed to basic and acidic residues over residues 1–10 (MNSMKTEENK) and 17–32 (DDQR…TVMK). Positions 1 to 32 (MNSMKTEENKSFSAMEDDQRTRPEVSKDTVMK) are disordered. Residue lysine 284 forms a Glycyl lysine isopeptide (Lys-Gly) (interchain with G-Cter in SUMO2) linkage. A disordered region spans residues 285 to 321 (QNESATDEINHQSLIQSKKKVHKPKKDGETKDVEHSR). Residues 310 to 321 (KDGETKDVEHSR) are compositionally biased toward basic and acidic residues. Catalysis depends on charge relay system residues histidine 490, aspartate 544, and serine 650. The tract at residues 712 to 734 (TYDEEKGKQESSLQDHQIEPMEC) is disordered.

It belongs to the FAM111 family. As to expression, widely expressed.

Its function is as follows. Serine protease. The sequence is that of Serine protease FAM111B from Homo sapiens (Human).